A 153-amino-acid polypeptide reads, in one-letter code: Endoribonuclease YbeY (153 aa).

Positions 114, 118, and 124 each coordinate Zn(2+).

Belongs to the endoribonuclease YbeY family. Zn(2+) is required as a cofactor.

The protein resides in the cytoplasm. Functionally, single strand-specific metallo-endoribonuclease involved in late-stage 70S ribosome quality control and in maturation of the 3' terminus of the 16S rRNA. The protein is Endoribonuclease YbeY of Finegoldia magna (strain ATCC 29328 / DSM 20472 / WAL 2508) (Peptostreptococcus magnus).